The sequence spans 146 residues: Nucleoside diphosphate kinase (146 aa).

ATP-binding residues include lysine 11, phenylalanine 59, arginine 87, threonine 93, arginine 104, and asparagine 114. Histidine 117 functions as the Pros-phosphohistidine intermediate in the catalytic mechanism.

It belongs to the NDK family. Homotetramer. Mg(2+) serves as cofactor.

The protein resides in the cytoplasm. It catalyses the reaction a 2'-deoxyribonucleoside 5'-diphosphate + ATP = a 2'-deoxyribonucleoside 5'-triphosphate + ADP. The catalysed reaction is a ribonucleoside 5'-diphosphate + ATP = a ribonucleoside 5'-triphosphate + ADP. Functionally, major role in the synthesis of nucleoside triphosphates other than ATP. The ATP gamma phosphate is transferred to the NDP beta phosphate via a ping-pong mechanism, using a phosphorylated active-site intermediate. The polypeptide is Nucleoside diphosphate kinase (Anaeromyxobacter sp. (strain Fw109-5)).